The primary structure comprises 1605 residues: GTPase-activating protein pac-1 (1605 aa).

The required for localization to adherens junctions stretch occupies residues 1-574 (MEEHHRRLHV…QRFIALFNSS (574 aa)). Disordered stretches follow at residues 293-430 (QRHP…ISTS), 529-556 (MRSGGASSATTTTTSNSGQQTSRSLNAP), and 574-593 (SKTSDGSGEHKKSRMKRSRT). The segment covering 323 to 334 (SKEDPSEDTGHD) has biased composition (basic and acidic residues). Composition is skewed to low complexity over residues 353-365 (RNASLRNRQSSRS), 420-430 (TTSSTSSISTS), and 530-552 (RSGGASSATTTTTSNSGQQTSRS). One can recognise a PH domain in the interval 599 to 726 (RFALPGTILQ…WISVLQSSSE (128 aa)). Composition is skewed to polar residues over residues 728–745 (GIATGSSVDENELSTTGR) and 846–855 (KNSQLQSPTA). 2 disordered regions span residues 728-752 (GIATGSSVDENELSTTGRHNNNAVS) and 846-942 (KNSQ…AGAP). Residues 868–879 (SSSQTMATTSSS) show a composition bias toward low complexity. A compositionally biased stretch (basic residues) spans 908-917 (SGRKWKKSKA). A compositionally biased stretch (low complexity) spans 928–941 (GSSSGSQQQGAAGA). Residues 948-1146 (VRIADCPTGS…TLIHYNLWMF (199 aa)) form the Rho-GAP domain. Disordered stretches follow at residues 1152-1176 (TEDAVPEQHPADGQNPLEPGGYGVG), 1207-1258 (EGKG…AASV), 1277-1339 (SRQT…RRKR), 1438-1533 (TSDY…ARRH), and 1554-1605 (GIRK…DELL). A compositionally biased stretch (basic residues) spans 1211–1229 (QKIKNMLRRNSRRDKSKSK). Polar residues-rich tracts occupy residues 1244-1257 (GWTQPTPSNTSAAS) and 1278-1300 (RQTVSPQMTSGSADGASSTRLDQ). The segment covering 1301–1312 (SPSLESSLGSLP) has biased composition (low complexity). Polar residues predominate over residues 1438-1453 (TSDYSTTSSAPLSTNP). The span at 1461–1476 (DQPNSSSDYASSDPSP) shows a compositional bias: low complexity. 2 stretches are compositionally biased toward polar residues: residues 1480 to 1493 (NPSTSPASRPSNLA) and 1500 to 1515 (HATSSSGQSHQPMSRS). Positions 1558 to 1575 (SSPDVSRDEVSDDEKNHQ) are enriched in basic and acidic residues.

In terms of assembly, associated with the catenin-cadherin complex consisting of hmr-1, hmp-1 and hmp-2; this is mediated by interaction with picc-1.

The protein localises to the cytoplasm. Its subcellular location is the cell junction. The protein resides in the adherens junction. GTPase-activating protein for members of the Rho subfamily including Rac1, RhoA and cdc42 and other Ras-related subfamilies including let-60. Mediates radial (inner-outer) polarity and gastrulation by excluding par-6 from contacted cell surfaces; acts by inactivating cdc42 at inner cell surfaces which limits active cdc42 to outer cell surfaces devoid of cell-cell contacts, where cdc42 can bind and recruit par-6. Required for blastomere polarization. In Caenorhabditis elegans, this protein is GTPase-activating protein pac-1 (pac-1).